The sequence spans 103 residues: Histone H4 (103 aa).

The segment covering 1 to 14 has biased composition (gly residues); that stretch reads MTGRGKGGKGLGKG. The disordered stretch occupies residues 1 to 20; it reads MTGRGKGGKGLGKGGAKRHR. Residues K6 and K13 each carry the N6-acetyl-N6-methyllysine; alternate modification. Residues 17–21 mediate DNA binding; it reads KRHRK.

Belongs to the histone H4 family. In terms of assembly, the nucleosome is a histone octamer containing two molecules each of H2A, H2B, H3 and H4 assembled in one H3-H4 heterotetramer and two H2A-H2B heterodimers. The octamer wraps approximately 147 bp of DNA.

It is found in the nucleus. The protein localises to the chromosome. Its function is as follows. Core component of nucleosome. Nucleosomes wrap and compact DNA into chromatin, limiting DNA accessibility to the cellular machineries which require DNA as a template. Histones thereby play a central role in transcription regulation, DNA repair, DNA replication and chromosomal stability. DNA accessibility is regulated via a complex set of post-translational modifications of histones, also called histone code, and nucleosome remodeling. The sequence is that of Histone H4 from Diadromus pulchellus (Parasitic wasp).